A 243-amino-acid polypeptide reads, in one-letter code: Leucyl/phenylalanyl-tRNA--protein transferase (243 aa).

The protein belongs to the L/F-transferase family.

It is found in the cytoplasm. The enzyme catalyses N-terminal L-lysyl-[protein] + L-leucyl-tRNA(Leu) = N-terminal L-leucyl-L-lysyl-[protein] + tRNA(Leu) + H(+). It carries out the reaction N-terminal L-arginyl-[protein] + L-leucyl-tRNA(Leu) = N-terminal L-leucyl-L-arginyl-[protein] + tRNA(Leu) + H(+). The catalysed reaction is L-phenylalanyl-tRNA(Phe) + an N-terminal L-alpha-aminoacyl-[protein] = an N-terminal L-phenylalanyl-L-alpha-aminoacyl-[protein] + tRNA(Phe). Functionally, functions in the N-end rule pathway of protein degradation where it conjugates Leu, Phe and, less efficiently, Met from aminoacyl-tRNAs to the N-termini of proteins containing an N-terminal arginine or lysine. The protein is Leucyl/phenylalanyl-tRNA--protein transferase of Vibrio cholerae serotype O1 (strain ATCC 39315 / El Tor Inaba N16961).